A 217-amino-acid polypeptide reads, in one-letter code: 3,4-dihydroxy-2-butanone 4-phosphate synthase (217 aa).

Residues 37 to 38 (RE), Asp-42, 150 to 154 (RRGHT), and Glu-174 each bind D-ribulose 5-phosphate. Residue Glu-38 coordinates Mg(2+). Position 153 (His-153) interacts with Mg(2+).

Belongs to the DHBP synthase family. As to quaternary structure, homodimer. Mg(2+) is required as a cofactor. It depends on Mn(2+) as a cofactor.

The catalysed reaction is D-ribulose 5-phosphate = (2S)-2-hydroxy-3-oxobutyl phosphate + formate + H(+). The protein operates within cofactor biosynthesis; riboflavin biosynthesis; 2-hydroxy-3-oxobutyl phosphate from D-ribulose 5-phosphate: step 1/1. In terms of biological role, catalyzes the conversion of D-ribulose 5-phosphate to formate and 3,4-dihydroxy-2-butanone 4-phosphate. This chain is 3,4-dihydroxy-2-butanone 4-phosphate synthase, found in Shewanella loihica (strain ATCC BAA-1088 / PV-4).